Here is a 931-residue protein sequence, read N- to C-terminus: MRHSIGLAAALLAPTLPVALGQHIRDLSSEKWTLSSRALNRTVPAQFPSQVHLDLLRAGVIGEYHGLNDFNLRWIAAANWTYTSQPIKGLLDNYGSTWLVFDGLDTFATISILWTANRIHGQSVSPVSGSMYLPALEACQRRILIRKVSFRGGVTAEVNTCYLHIEWPDDVQLTYEYPNRWFMRKEQSDFGWDWGPAFAPAGPWKPAYIVQLDKKESVYVLNTDLDIYRKNQINYLPPDQSQPWVVNASIDILGPLPAKPTMSIEVRDTHSGTILTSRTLNNVSVAGNAITGVTVLDGLNPKLWWPQSSVIRTSTMFLSLSKVEGTRPWPVWTNGRASAPFFLNQRNITEVQRAQGIAPGANWHFEVNGHEFYAKGSNLIPPDSFWTRVTEERISRLFDAVVVGNQNMLRVWSSGAYLHDYIYDLADEKGILLWSEFEFSDALYPSDDAFLENVAAEIVYNVRRVNHHPSLALWAGGNEIESLMLPRVKDAAPSSYSYYVGEYEKMYISLFLPLVYENTRSISYSPSSTTEGYLYIDLSAPVPMAERYDNTTSGSYYGDTDHYDYDTSVAFDYGSYPVGRFANEFGFHSMPSLQTWQQAVDTEDLYFNSSVVMLRNHHDPAGGLMTDNYANSATGMGEMTMGVISYYPIPSKSDHISNFSAWCHATQLFQADMYKSQIQFYRRGSGMPERQLGSLYWQLEDIWQAPSWAGIEYGGRWKVLHHVMRDIYQPVIVSPFWNYTTGSLDVYVTSDLWSPAAGTVDLTWLDLSGRPIAGNAGTPKSVPFTVGGLNSTRIYGTNVSSLGLPDTKDAVLILSLSAHGRLPNSDRTTNLTHENYATLSWPKDLKIVDPGLKLGYSSKKTTVTVEATSGVSLYTWLDYPEGVVGYFEENAFVLAPGEKKEIGFTVLDDTTNGAWVRNITVQSLWDQKVRG.

The N-terminal stretch at 1-21 (MRHSIGLAAALLAPTLPVALG) is a signal peptide. N-linked (GlcNAc...) asparagine glycans are attached at residues N40, N79, N247, N282, and N347. Catalysis depends on E479, which acts as the Proton donor. 8 N-linked (GlcNAc...) asparagine glycosylation sites follow: N550, N608, N658, N738, N790, N798, N830, and N918.

The protein belongs to the glycosyl hydrolase 2 family. Beta-mannosidase A subfamily. In terms of assembly, homodimer. N-glycosylated.

It localises to the secreted. The catalysed reaction is Hydrolysis of terminal, non-reducing beta-D-mannose residues in beta-D-mannosides.. Its pathway is glycan metabolism; N-glycan degradation. In terms of biological role, exoglycosidase that cleaves the single beta-linked mannose residue from the non-reducing end of beta-mannosidic oligosaccharides of various complexity and length. Involved in the degradation of polymeric mannan and galactomannan. Releases the terminal mannose residue from mannobiose and mannotriose, as well as from galactosyl-mannobiose (GM2), galactosyl-mannotriose (GM3) and di-galactosyl-mannopentaose (G2M5). In Aspergillus niger, this protein is Beta-mannosidase A (mndA).